The following is a 295-amino-acid chain: bZIP transcription factor 60 (295 aa).

Positions 101–154 (PAAADDSGKENSDLVVEKKSNDSGSEIHDDDDEEGDDDAVAKKRRRRVRNRDAA) are disordered. A compositionally biased stretch (basic and acidic residues) spans 106–127 (DSGKENSDLVVEKKSNDSGSEI). Acidic residues predominate over residues 128 to 138 (HDDDDEEGDDD). The 64-residue stretch at 140 to 203 (VAKKRRRRVR…QSLRYCLQKG (64 aa)) folds into the bZIP domain. Residues 142-162 (KKRRRRVRNRDAAVRSRERKK) form a basic motif region. Residues 168-182 (LEKKSKYLERECLRL) are leucine-zipper. Residues 224–244 (LLLGSLLWLLGVNFICLFPYM) form a helical membrane-spanning segment.

Belongs to the bZIP family. In terms of assembly, interacts with BZIP28. In terms of tissue distribution, expressed in seedlings, rosette and cauline leaves, stems, buds, flowers, siliques, immature seeds, anthers and pollen grains.

The protein resides in the endoplasmic reticulum membrane. It localises to the nucleus. Functionally, transcription factor involved in the unfolded protein response (UPR). Acts during endoplasmic reticulum stress (ER) by activating unfolded protein response (UPR) target genes via direct binding to the UPR element (UPRE). Plays a role in plant immunity and abiotic stress responses. This chain is bZIP transcription factor 60, found in Arabidopsis thaliana (Mouse-ear cress).